Here is a 222-residue protein sequence, read N- to C-terminus: Small ribosomal subunit protein uS7m (222 aa).

Belongs to the universal ribosomal protein uS7 family. In terms of assembly, part of the small ribosomal subunit.

Its subcellular location is the mitochondrion. One of the primary rRNA binding proteins, it binds directly to 18S rRNA where it nucleates assembly of the head domain of the small subunit. The polypeptide is Small ribosomal subunit protein uS7m (RPS7) (Prototheca wickerhamii).